A 315-amino-acid polypeptide reads, in one-letter code: tRNA uridine(34) hydroxylase (315 aa).

The 95-residue stretch at Ser-136–Ser-230 folds into the Rhodanese domain. Residue Cys-190 is the Cysteine persulfide intermediate of the active site.

The protein belongs to the TrhO family.

The catalysed reaction is uridine(34) in tRNA + AH2 + O2 = 5-hydroxyuridine(34) in tRNA + A + H2O. In terms of biological role, catalyzes oxygen-dependent 5-hydroxyuridine (ho5U) modification at position 34 in tRNAs. This is tRNA uridine(34) hydroxylase from Sinorhizobium medicae (strain WSM419) (Ensifer medicae).